Consider the following 295-residue polypeptide: MGIQSSTMKLPLIHEISDYWHLLKPKIMYLVVLTGVTGIIIAPGNIHPLIAVISTLCIALGSGAAGAINMWYDSDIDALMTRTKTRPIPAGKISRSSALEVGLVLSFISVTIMMIAVNYISGILLAISIGFYIYVYTMYLKRRTPQNIVIGGAAGALPPIIGWTSVTGSISIESLVLFLIIFMWTPPHFWALSLLNYHEYEKAKIPMLPVTHGIFTTKIHILVYSILLFPITLLPGLFLKDPVLYEITAIPLGLMFVVQAFQVFKSSISYHYRVMFTYSIIYLFILFTCIMLSSF.

9 consecutive transmembrane segments (helical) span residues 30 to 50, 51 to 71, 93 to 115, 119 to 136, 148 to 168, 175 to 195, 219 to 239, 244 to 264, and 275 to 295; these read LVVLTGVTGIIIAPGNIHPLI, AVISTLCIALGSGAAGAINMW, ISRSSALEVGLVLSFISVTIMMI, YISGILLAISIGFYIYVY, IVIGGAAGALPPIIGWTSVTG, LVLFLIIFMWTPPHFWALSLL, IHILVYSILLFPITLLPGLFL, LYEITAIPLGLMFVVQAFQVF, and MFTYSIIYLFILFTCIMLSSF.

This sequence belongs to the UbiA prenyltransferase family. Protoheme IX farnesyltransferase subfamily.

It localises to the cell inner membrane. The catalysed reaction is heme b + (2E,6E)-farnesyl diphosphate + H2O = Fe(II)-heme o + diphosphate. The protein operates within porphyrin-containing compound metabolism; heme O biosynthesis; heme O from protoheme: step 1/1. In terms of biological role, converts heme B (protoheme IX) to heme O by substitution of the vinyl group on carbon 2 of heme B porphyrin ring with a hydroxyethyl farnesyl side group. This Ehrlichia ruminantium (strain Welgevonden) protein is Protoheme IX farnesyltransferase.